We begin with the raw amino-acid sequence, 188 residues long: Elongation factor P (188 aa).

This sequence belongs to the elongation factor P family.

It localises to the cytoplasm. It functions in the pathway protein biosynthesis; polypeptide chain elongation. In terms of biological role, involved in peptide bond synthesis. Stimulates efficient translation and peptide-bond synthesis on native or reconstituted 70S ribosomes in vitro. Probably functions indirectly by altering the affinity of the ribosome for aminoacyl-tRNA, thus increasing their reactivity as acceptors for peptidyl transferase. The chain is Elongation factor P from Rickettsia typhi (strain ATCC VR-144 / Wilmington).